We begin with the raw amino-acid sequence, 60 residues long: Large ribosomal subunit protein bL32 (60 aa).

The interval 1 to 47 (MAVQQNRKTRSKRGMRRSHDALTSSTLSTDPTTGEKHRRHHVTADGF) is disordered. Basic residues predominate over residues 7-16 (RKTRSKRGMR).

The protein belongs to the bacterial ribosomal protein bL32 family.

The protein is Large ribosomal subunit protein bL32 of Teredinibacter turnerae (strain ATCC 39867 / T7901).